We begin with the raw amino-acid sequence, 256 residues long: Protein RGF1 INDUCIBLE TRANSCRIPTION FACTOR 1 (256 aa).

A B box-type zinc finger spans residues 21–59 (CPYHETAKKNERNVCCLDCCTSLCPHCVPSHRFHRLLQV).

Expressed predominantly in root meristematic zones.

It is found in the nucleus. In terms of biological role, probable transcription factor that plays a central role in mediating RGF1 hormone peptide signaling leading to the production of reactive oxygen species (ROS) in roots to modulate meristem size and root growth, probably via oxidative post-translational modification of the transcription factor PLETHORA (e.g. PLT1 and PLT2). In Arabidopsis thaliana (Mouse-ear cress), this protein is Protein RGF1 INDUCIBLE TRANSCRIPTION FACTOR 1.